The sequence spans 334 residues: Methionyl-tRNA formyltransferase (334 aa).

111–114 serves as a coordination point for (6S)-5,6,7,8-tetrahydrofolate; sequence SLLP.

It belongs to the Fmt family.

It catalyses the reaction L-methionyl-tRNA(fMet) + (6R)-10-formyltetrahydrofolate = N-formyl-L-methionyl-tRNA(fMet) + (6S)-5,6,7,8-tetrahydrofolate + H(+). Functionally, attaches a formyl group to the free amino group of methionyl-tRNA(fMet). The formyl group appears to play a dual role in the initiator identity of N-formylmethionyl-tRNA by promoting its recognition by IF2 and preventing the misappropriation of this tRNA by the elongation apparatus. This Cyanothece sp. (strain PCC 7425 / ATCC 29141) protein is Methionyl-tRNA formyltransferase.